Here is a 262-residue protein sequence, read N- to C-terminus: Cytochrome c oxidase subunit 3 (262 aa).

A run of 7 helical transmembrane segments spans residues 11–31 (LVEP…LTVG), 32–52 (LVMW…VMIV), 83–103 (GMVL…WAFF), 125–147 (LNAF…TVTW), 160–180 (AIQS…LQAW), 198–218 (FFVA…FLMV), and 240–260 (AWYW…IYWW).

The protein belongs to the cytochrome c oxidase subunit 3 family. Component of the cytochrome c oxidase (complex IV, CIV), a multisubunit enzyme composed of a catalytic core of 3 subunits and several supernumerary subunits. The complex exists as a monomer or a dimer and forms supercomplexes (SCs) in the inner mitochondrial membrane with ubiquinol-cytochrome c oxidoreductase (cytochrome b-c1 complex, complex III, CIII).

The protein resides in the mitochondrion inner membrane. It carries out the reaction 4 Fe(II)-[cytochrome c] + O2 + 8 H(+)(in) = 4 Fe(III)-[cytochrome c] + 2 H2O + 4 H(+)(out). In terms of biological role, component of the cytochrome c oxidase, the last enzyme in the mitochondrial electron transport chain which drives oxidative phosphorylation. The respiratory chain contains 3 multisubunit complexes succinate dehydrogenase (complex II, CII), ubiquinol-cytochrome c oxidoreductase (cytochrome b-c1 complex, complex III, CIII) and cytochrome c oxidase (complex IV, CIV), that cooperate to transfer electrons derived from NADH and succinate to molecular oxygen, creating an electrochemical gradient over the inner membrane that drives transmembrane transport and the ATP synthase. Cytochrome c oxidase is the component of the respiratory chain that catalyzes the reduction of oxygen to water. Electrons originating from reduced cytochrome c in the intermembrane space (IMS) are transferred via the dinuclear copper A center (CU(A)) of subunit 2 and heme A of subunit 1 to the active site in subunit 1, a binuclear center (BNC) formed by heme A3 and copper B (CU(B)). The BNC reduces molecular oxygen to 2 water molecules using 4 electrons from cytochrome c in the IMS and 4 protons from the mitochondrial matrix. The protein is Cytochrome c oxidase subunit 3 (COIII) of Branchiostoma floridae (Florida lancelet).